An 81-amino-acid chain; its full sequence is U1-sicaritoxin-Li1c (81 aa).

A propeptide spanning residues 1 to 16 (ARGDAEKWESLISEER) is cleaved from the precursor. 4 disulfide bridges follow: cysteine 18–cysteine 35, cysteine 26–cysteine 40, cysteine 34–cysteine 53, and cysteine 42–cysteine 51. The residue at position 62 (arginine 62) is an Arginine amide. A propeptide spanning residues 66-81 (ALMLDPETHRLLFSED) is cleaved from the precursor.

The protein belongs to the neurotoxin 28 (Litx) family. In terms of tissue distribution, expressed by the venom gland.

The protein resides in the secreted. Its function is as follows. Toxin active against insects (S.frugiperda larvae). May act on sodium (Nav) or calcium (Cav) channels. The chain is U1-sicaritoxin-Li1c from Loxosceles intermedia (Brown spider).